The primary structure comprises 986 residues: Ubiquitin carboxyl-terminal hydrolase 37 (986 aa).

Positions 32 to 34 (KDN) match the KEN box 1 motif. 2 short sequence motifs (D-box) span residues 71-79 (CLMLTLKDT) and 96-105 (RMYLDAVHQD). Disordered stretches follow at residues 134 to 238 (NRQF…MSDP) and 251 to 305 (LKLK…KRSL). Positions 149 to 159 (VTVESKDETPF) are enriched in basic and acidic residues. Positions 160–168 (RKVLGTPAR) match the D-box 3 motif. The segment covering 171–195 (VKNSSGTGAPSNRVNVAASPTSSVP) has biased composition (polar residues). Residues 224 to 226 (KEN) carry the KEN box 2 motif. The span at 251-260 (LKLKQEEENR) shows a compositional bias: basic and acidic residues. The segment covering 269-298 (SSSYYGSRSSSKEYSTSSSTLDRSSVSSQT) has biased composition (low complexity). The region spanning 344-958 (QGFSNLGNTC…SGYIFFYMHK (615 aa)) is the USP domain. C353 functions as the Nucleophile in the catalytic mechanism. Disordered stretches follow at residues 683–710 (VQRG…GFDG) and 729–751 (SLSL…GDDE). Residues 712–731 (SEDELLAAVLEISKREASLS) enclose the UIM 1 domain. Residues 729–739 (SLSLSHDEDKP) show a composition bias toward basic and acidic residues. The short motif at 789–791 (KEN) is the KEN box 3 element. A disordered region spans residues 811 to 840 (REREEQELQQALAQSLQEQEAREQKEDDDL). UIM domains lie at 813–832 (REEQ…QEAR) and 835–854 (KEDD…FNSS). The segment covering 818–828 (LQQALAQSLQE) has biased composition (low complexity). The segment covering 829 to 840 (QEAREQKEDDDL) has biased composition (basic and acidic residues). H913 serves as the catalytic Proton acceptor.

It belongs to the peptidase C19 family.

It catalyses the reaction Thiol-dependent hydrolysis of ester, thioester, amide, peptide and isopeptide bonds formed by the C-terminal Gly of ubiquitin (a 76-residue protein attached to proteins as an intracellular targeting signal).. Deubiquitinase that antagonizes the anaphase-promoting complex (APC/C) during G1/S transition by mediating deubiquitination of APC/C target proteins, thereby promoting S phase entry. Specifically mediates deubiquitination of 'Lys-11'-linked polyubiquitin chains, a specific ubiquitin-linkage type mediated by the APC/C complex. The protein is Ubiquitin carboxyl-terminal hydrolase 37 (USP37) of Gallus gallus (Chicken).